The chain runs to 424 residues: Serine--tRNA ligase (424 aa).

230–232 contacts L-serine; sequence TAE. Residue 261–263 participates in ATP binding; the sequence is RSE. Glu284 lines the L-serine pocket. 348 to 351 contributes to the ATP binding site; sequence EISS. Ser384 contributes to the L-serine binding site.

The protein belongs to the class-II aminoacyl-tRNA synthetase family. Type-1 seryl-tRNA synthetase subfamily. In terms of assembly, homodimer. The tRNA molecule binds across the dimer.

Its subcellular location is the cytoplasm. It catalyses the reaction tRNA(Ser) + L-serine + ATP = L-seryl-tRNA(Ser) + AMP + diphosphate + H(+). It carries out the reaction tRNA(Sec) + L-serine + ATP = L-seryl-tRNA(Sec) + AMP + diphosphate + H(+). Its pathway is aminoacyl-tRNA biosynthesis; selenocysteinyl-tRNA(Sec) biosynthesis; L-seryl-tRNA(Sec) from L-serine and tRNA(Sec): step 1/1. Its function is as follows. Catalyzes the attachment of serine to tRNA(Ser). Is also able to aminoacylate tRNA(Sec) with serine, to form the misacylated tRNA L-seryl-tRNA(Sec), which will be further converted into selenocysteinyl-tRNA(Sec). This chain is Serine--tRNA ligase, found in Streptococcus pneumoniae (strain ATCC 700669 / Spain 23F-1).